The following is a 90-amino-acid chain: Antitoxin epsilon (90 aa).

The protein belongs to the epsilon antitoxin family. In the presence of the zeta toxin, forms an inactive PezA(2)PezT(2) heterotetramer.

Functionally, antitoxin component of a type II toxin-antitoxin (TA) system. Neutralizes the toxic effect of cognate zeta toxin. Part of a postsegregational killing (PSK) system involved in the killing of plasmid-free cells. Continuous synthesis of the epsilon antitoxin is required to counteract the zeta toxin. In Streptococcus agalactiae, this protein is Antitoxin epsilon.